The sequence spans 431 residues: Enolase (431 aa).

Glutamine 166 contacts (2R)-2-phosphoglycerate. Glutamate 208 acts as the Proton donor in catalysis. Mg(2+)-binding residues include aspartate 245, glutamate 288, and aspartate 315. 4 residues coordinate (2R)-2-phosphoglycerate: lysine 340, arginine 369, serine 370, and lysine 391. The active-site Proton acceptor is lysine 340.

The protein belongs to the enolase family. It depends on Mg(2+) as a cofactor.

The protein resides in the cytoplasm. The protein localises to the secreted. It is found in the cell surface. It carries out the reaction (2R)-2-phosphoglycerate = phosphoenolpyruvate + H2O. It functions in the pathway carbohydrate degradation; glycolysis; pyruvate from D-glyceraldehyde 3-phosphate: step 4/5. Its function is as follows. Catalyzes the reversible conversion of 2-phosphoglycerate (2-PG) into phosphoenolpyruvate (PEP). It is essential for the degradation of carbohydrates via glycolysis. This is Enolase from Clostridium botulinum (strain Eklund 17B / Type B).